Consider the following 432-residue polypeptide: MAAPMEVAVCTDSAAPMWSCIVWELHSGANLLTYRGGQAGPRGLALLNGEYLLAAQLGKNYISAWELQRKDQLQQKIMCPGPVTCLTASPNGLYVLAGVAESIHLWEVSTGNLLVILSRHYQDVSCLQFTGDSSHFISGGKDCLVLVWSLCSVLQADPSRIPAPRHVWSHHALPITDLHCGFGGPLARVATSSLDQTVKLWEVSSGELLLSVLFDVSIMAVTMDLAEHHMFCGGSEGSIFQVDLFTWPGQRERSFHPEQDAGKVFKGHRNQVTCLSVSTDGSVLLSGSHDETVRLWDVQSKQCIRTVALKGPVTNAAILLAPVSMLSSDFRPSLPLPHFNKHLLGAEHGDEPRHGGLTLRLGLHQQGSEPSYLDRTEQLQAVLCSTMEKSVLGGQDQLRVRVTELEDEVRNLRKINRDLFDFSTRFITRPAK.

WD repeat units follow at residues 36–75 (GGQA…QLQQ), 78–116 (MCPG…LLVI), 119–158 (RHYQ…QADP), 170–211 (HHAL…LLLS), 213–257 (LFDV…SFHP), and 267–306 (GHRN…CIRT).

It belongs to the WD repeat IPI3/WDR18 family. Component of the 5FMC complex, at least composed of PELP1, LAS1L, TEX10, WDR18 and SENP3; the complex interacts with methylated CHTOP and ZNF148. Interacts with NOL9. Component of the PELP1 complex, composed of at least PELP1, TEX10 and WDR18. The complex interacts with pre-60S ribosome particles.

It localises to the nucleus. It is found in the nucleolus. Its subcellular location is the nucleoplasm. The protein localises to the cytoplasm. The protein resides in the dynein axonemal particle. In terms of biological role, functions as a component of the Five Friends of Methylated CHTOP (5FMC) complex; the 5FMC complex is recruited to ZNF148 by methylated CHTOP, leading to desumoylation of ZNF148 and subsequent transactivation of ZNF148 target genes. Component of the PELP1 complex involved in the nucleolar steps of 28S rRNA maturation and the subsequent nucleoplasmic transit of the pre-60S ribosomal subunit. May play a role during development. The polypeptide is WD repeat-containing protein 18 (WDR18) (Homo sapiens (Human)).